The primary structure comprises 667 residues: MAALLLLLPLLLLLPLLLKLDVWPQLRWLPADLAFTVRALRCKRALRARALAAAAADPESSESGCSLAWRLAYLAREQPTHTFLIHGAQRFSYAEAERESNRIARAFLRARGWTGGRRGSGRGSTEEGARVAPPAGDAAARGTTAPPLAPGATVALLLPAGPDFLWIWFGLAKAGLRTAFVPTALRRGPLLHCLRSCGASALVLATEFLESLEPDLPALRAMGLHLWATGPETNVAGISNLLSEAADQVDEPVPGYLSAPQNIMDTCLYIFTSGTTGLPKAARISHLKVLQCQGFYHLCGVHQEDVIYLALPLYHMSGSLLGIVGCLGIGATVVLKPKFSASQFWDDCQKHRVTVFQYIGELCRYLVNQPPSKAECDHKVRLAVGSGLRPDTWERFLRRFGPLQILETYGMTEGNVATFNYTGRQGAVGRASWLYKHIFPFSLIRYDVMTGEPIRNAQGHCMTTSPGEPGLLVAPVSQQSPFLGYAGAPELAKDKLLKDVFWSGDVFFNTGDLLVCDEQGFLHFHDRTGDTIRWKGENVATTEVAEVLETLDFLQEVNIYGVTVPGHEGRAGMAALALRPPQALNLVQLYSHVSENLPPYARPRFLRLQESLATTETFKQQKVRMANEGFDPSVLSDPLYVLDQDIGAYLPLTPARYSALLSGDLRI.

The helical transmembrane segment at 3-23 threads the bilayer; that stretch reads ALLLLLPLLLLLPLLLKLDVW. Residues 114 to 144 are disordered; the sequence is TGGRRGSGRGSTEEGARVAPPAGDAAARGTT. The span at 130–144 shows a compositional bias: low complexity; sequence RVAPPAGDAAARGTT. Residues 272–276, His315, Thr412, Asp512, Arg527, and Lys619 contribute to the ATP site; that span reads TSGTT.

Belongs to the ATP-dependent AMP-binding enzyme family. In terms of tissue distribution, expressed at high levels in adrenal gland, testis and ovary. Expressed at lower levels in adult brain. Found in adrenal cortical cells, spermatocytes and interstitial cells of the testis, theca cells of the ovary, cerebral cortical neurons, and cerebellar Purkinje cells (at protein level).

It is found in the mitochondrion membrane. It carries out the reaction a fatty acid(in) = a fatty acid(out). The catalysed reaction is a long-chain fatty acid + ATP + CoA = a long-chain fatty acyl-CoA + AMP + diphosphate. It catalyses the reaction (5Z,8Z,11Z,14Z)-eicosatetraenoate + ATP + CoA = (5Z,8Z,11Z,14Z)-eicosatetraenoyl-CoA + AMP + diphosphate. The enzyme catalyses hexadecanoate + ATP + CoA = hexadecanoyl-CoA + AMP + diphosphate. It carries out the reaction (9Z)-octadecenoate + ATP + CoA = (9Z)-octadecenoyl-CoA + AMP + diphosphate. The catalysed reaction is (9Z,12Z)-octadecadienoate + ATP + CoA = (9Z,12Z)-octadecadienoyl-CoA + AMP + diphosphate. It catalyses the reaction a very long-chain fatty acid + ATP + CoA = a very long-chain fatty acyl-CoA + AMP + diphosphate. The enzyme catalyses tetracosanoate + ATP + CoA = tetracosanoyl-CoA + AMP + diphosphate. Mainly functions as an acyl-CoA ligase catalyzing the ATP-dependent formation of fatty acyl-CoA using LCFA and very-long-chain fatty acids (VLCFA) as substrates. Can mediate the levels of long-chain fatty acids (LCFA) in the cell by facilitating their transport across membranes. This Mus musculus (Mouse) protein is Long-chain fatty acid transport protein 3 (Slc27a3).